Consider the following 1861-residue polypeptide: MLKAVLKKSREGGKGGKKEAGSDFGPETSPVLHLDHSADSPVSSLPTAEDTYRVSLAKGVSMSLPSSPLLPRQSHLVQSRVNKKSPGPVRKPKYVESPRVPGDAVIMPFREVAKPTEPDEHEAKADNEPSCSPAAQELLTRLGFLLGEGIPSATHITIEDKNETMCTALSQGISPCSTLTSSTASPSTDSPCSTLNSCVSKTAANKSPCETISSPSSTLESKDSGIIATITSSSENDDRSGSSLEWNKDGNLRLGVQKGVLHDRRADNCSPVAEEETTGSAESTLPKAESSAGDGPVPYSQGSSSLIMPRPNSVAATSSTKLEDLSYLDGQRNAPLRTSIRLPWHNTAGGRAQEVKARFAPYKPQDILLKPLLFEVPSITTDSVFVGRDWLFHQIEENLRNTELAENRGAVVVGNVGFGKTAIISKLVALSCHGSRMRQIASNSPGSSPKTSDPTQDLHFTPLLSPSSSTSASSTAKTPLGSISAENQRPREDAVKYLASKVVAYHYCQADNTYTCLVPEFVHSIAALLCRSHQLAAYRDLLIKEPQLQSMLSLRSCVQDPVAAFKRGVLEPLTNLRNEQKIPEEEYIILIDGLNEAEFHKPDYGDTLSSFITKIISKFPAWLKLIVTVRANFQEIISALPFVKLSLDDFPDNKDIHSDLHAYVQHRVHSSQDILSNISLNGKADATLIGKVSSHLVLRSLGSYLYLKLTLDLFQRGHLVIKSASYKVVPVSLSELYLLQCNMKFMTQSAFERALPILNVALASLHPMTDEQIFQAINAGHIQGEQGWEDFQQRMDALSCFLIKRRDKTRMFCHPSFREWLVWRADGENTAFLCEPRNGHALLAFMFSRQEGKLNRQQTMELGHHILKAHIFKGLSKKTGISSSHLQALWIGYSTEGLSAALASLRNLYTPNVKVSRLLILGGANVNYRTEVLNNAPILCVQSHLGHEEVVTLLLEFGACLDGTSENGMTALCYAAAAGHMKLVCLLTKKGVRVDHLDKKGQCALVHSALRGHGDILQYLLTCEWSPGPPQPGTLRKSHALQQALTAAASMGHSSVVQCLLGMEKEHEVEVNGTDTLWGETALTAAAGRGKLEVCELLLGHGAAVSRTNRRGVPPLFCAARQGHWQIVRLLLERGCDVNLSDKQGRTPLMVAACEGHLSTVEFLLSKGAALSSLDKEGLSALSWACLKGHRAVVQYLVEEGAAIDQTDKNGRTPLDLAAFYGDAETVLYLVEKGAVIEHVDHSGMRPLDRAIGCRNTSVVVALLRKGAKLGNAAWAMATSKPDILIILLQKLMEEGNVMYKKGKMKEAAQRYQYALRKFPREGFGEDMRPFNELRVSLYLNLSRCRRKTNDFGMAEEFASKALELKPKSYEAFYARARAKRNSRQFVAALADLQEAVKLCPTNQEVKRLLARVEEECKQLQRSQQQKQQGPLPAPLNDSENEEDTPTPGLSDHFHSEETEEEETSPQEESVSPTPRSQPSSSVPSSYIRNLQEGLQSKGRPVSPQSRAGIGKSLREPVAQPGLLLQPSKQAQIVKTSQHLGSGQSAVRNGSMKVQISSQNPPPSPMPGRIAATPAGSRTQHLEGTGTFTTRAGCGHFGDRLGPSQNVRLQCGENGPAHPLPSKTKTTERLLSHSSVAVDAAPPNQGGLATCSDVRHPASLTSSGSSGSPSSSIKMSSSTSSLTSSSSFSDGFKVQGPDTRIKDKVVTHVQSGTAEHRPRNTPFMGIMDKTARFQQQSNPPSRSWHCPAPEGLLTNTSSAAGLQSANTEKPSLMQVGGYNNQAKTCSVSTLSASVHNGAQVKELEESKCQIPVHSQENRITKTVSHLYQESISKQQPHISNEAHRSHLTAAKPKRSFIESNV.

At methionine 1 the chain carries N-acetylmethionine. Disordered stretches follow at residues 1–46 (MLKA…SSLP), 63–99 (SLPS…ESPR), 206–225 (KSPC…KDSG), 257–311 (QKGV…MPRP), and 439–486 (QIAS…ISAE). The span at 8–21 (KSREGGKGGKKEAG) shows a compositional bias: basic and acidic residues. Serine 63, serine 66, serine 67, serine 207, and serine 270 each carry phosphoserine. The span at 206 to 219 (KSPCETISSPSSTL) shows a compositional bias: polar residues. Residues 440 to 455 (IASNSPGSSPKTSDPT) are compositionally biased toward polar residues. The segment covering 461-480 (TPLLSPSSSTSASSTAKTPL) has biased composition (low complexity). A Phosphoserine modification is found at serine 465. 11 ANK repeats span residues 896 to 928 (EGLS…NVNY), 934 to 963 (NNAP…CLDG), 967 to 996 (NGMT…RVDH), 1000 to 1029 (KGQC…SPGP), 1040 to 1069 (ALQQ…EHEV), 1078 to 1107 (WGET…AVSR), 1111 to 1140 (RGVP…DVNL), 1144 to 1173 (QGRT…ALSS), 1177 to 1206 (EGLS…AIDQ), 1210 to 1239 (NGRT…VIEH), and 1243 to 1272 (SGMR…KLGN). 3 TPR repeats span residues 1289–1322 (LQKL…FPRE), 1336–1369 (VSLY…KPKS), and 1371–1403 (EAFY…CPTN). The span at 1421-1431 (QRSQQQKQQGP) shows a compositional bias: low complexity. 2 disordered regions span residues 1421-1485 (QRSQ…SVPS) and 1636-1696 (VAVD…KVQG). Position 1439 is a phosphoserine (serine 1439). Low complexity-rich tracts occupy residues 1467–1485 (QEES…SVPS) and 1659–1689 (SLTS…SSFS). Residues serine 1668, serine 1676, and serine 1677 each carry the phosphoserine modification.

Belongs to the TANC family. As to quaternary structure, interacts probably directly with DLG1, DLG4, HOMER1. Interacts with DLGAP1, INA, CAMK2A, GRIN2B and GRIA1. Interacts with TNIK. Interacts with MINK1. In terms of processing, phosphorylated; by MINK1 and TNIK upon stimulation by RAP2A.

It is found in the postsynaptic density. Functionally, may be a scaffold component in the postsynaptic density. This Homo sapiens (Human) protein is Protein TANC1 (TANC1).